Here is a 585-residue protein sequence, read N- to C-terminus: Acetolactate synthase large subunit (585 aa).

Glu60 contributes to the thiamine diphosphate binding site. FAD is bound by residues Arg162, 272 to 293 (HGTA…LGAR), and 315 to 334 (DIDP…IISD). Residues 407-486 (QHQMWAAQFL…IKIFIINNQW (80 aa)) form a thiamine pyrophosphate binding region. Mg(2+)-binding residues include Asp457 and Asn484.

Belongs to the TPP enzyme family. As to quaternary structure, dimer of large and small chains. Mg(2+) is required as a cofactor. The cofactor is thiamine diphosphate.

It localises to the plastid. The protein localises to the chloroplast. It carries out the reaction 2 pyruvate + H(+) = (2S)-2-acetolactate + CO2. It functions in the pathway amino-acid biosynthesis; L-isoleucine biosynthesis; L-isoleucine from 2-oxobutanoate: step 1/4. Its pathway is amino-acid biosynthesis; L-valine biosynthesis; L-valine from pyruvate: step 1/4. This is Acetolactate synthase large subunit (ilvB) from Cyanidium caldarium (Red alga).